Reading from the N-terminus, the 331-residue chain is Phosphate acyltransferase (331 aa).

The protein belongs to the PlsX family. Homodimer. Probably interacts with PlsY.

It is found in the cytoplasm. The enzyme catalyses a fatty acyl-[ACP] + phosphate = an acyl phosphate + holo-[ACP]. Its pathway is lipid metabolism; phospholipid metabolism. Functionally, catalyzes the reversible formation of acyl-phosphate (acyl-PO(4)) from acyl-[acyl-carrier-protein] (acyl-ACP). This enzyme utilizes acyl-ACP as fatty acyl donor, but not acyl-CoA. The polypeptide is Phosphate acyltransferase (Ureaplasma urealyticum serovar 10 (strain ATCC 33699 / Western)).